The sequence spans 152 residues: Small ribosomal subunit protein uS8m (152 aa).

This sequence belongs to the universal ribosomal protein uS8 family.

The protein resides in the mitochondrion. This Dictyostelium citrinum (Slime mold) protein is Small ribosomal subunit protein uS8m (mrps8).